The primary structure comprises 455 residues: Venom prothrombin activator notecarin-D1 (455 aa).

The N-terminal stretch at 1 to 20 (MAPQLLLCLILTFLWSLPEA) is a signal peptide. The propeptide occupies 21–40 (ESNVFLKSKVANRFLQRTKR). Positions 41–86 (SNSLFEEIRPGNIERECIEEKCSKEEAREVFEDNEKTETFWNVYVD) constitute a Gla domain. E46, E47, E54, E56, E59, E60, E65, E66, E69, E72, and E75 each carry 4-carboxyglutamate. Cysteines 57 and 62 form a disulfide. One can recognise an EGF-like 1; calcium-binding domain in the interval 86-122 (DGDQCSSNPCHYRGTCKDGIGSYTCTCLPNYEGKNCE). Cystine bridges form between C90–C101, C95–C110, C112–C121, C129–C140, C136–C149, C151–C164, C172–C328, C216–C221, C236–C252, C376–C390, and C401–C429. O-linked (Hex...) serine glycosylation is present at S92. The region spanning 129 to 164 (CRVDNGNCWHFCKRVQSETQCSCAESYRLGVDGHSC) is the EGF-like 2 domain. Positions 182-209 (REASLPDFVQSQKATLLKKSDNPSPDIR) are cleaved as a propeptide — activation peptide. The Peptidase S1 domain maps to 210–453 (IVNGMDCKLG…FIPWIKKIMS (244 aa)). The Charge relay system role is filled by H251. N-linked (GlcNAc...) asparagine glycosylation occurs at N254. D308 acts as the Charge relay system in catalysis. Residue S405 is the Charge relay system of the active site.

The protein belongs to the peptidase S1 family. Snake venom subfamily. Heterodimer of a light chain and a heavy chain; disulfide-linked. In terms of processing, gamma-carboxyglutamate residues are formed by vitamin K dependent carboxylation. These residues are essential for the binding of calcium. Expressed by the venom gland.

It localises to the secreted. It catalyses the reaction Selective cleavage of Arg-|-Thr and then Arg-|-Ile bonds in prothrombin to form thrombin.. Snake prothrombin activator that attacks the hemostatic system of prey. This protein is functionally similar to blood coagulation factor Xa. The chain is Venom prothrombin activator notecarin-D1 from Notechis scutatus scutatus (Mainland tiger snake).